Here is a 79-residue protein sequence, read N- to C-terminus: Short neurotoxin 2 (79 aa).

The first 21 residues, 1–21 (MKTLLLTLVMVTIMCLDLGYT), serve as a signal peptide directing secretion. Disulfide bonds link C24-C41, C34-C59, C63-C71, and C72-C77.

This sequence belongs to the three-finger toxin family. Short-chain subfamily. Type III alpha-neurotoxin sub-subfamily. In terms of tissue distribution, expressed by the venom gland.

Its subcellular location is the secreted. In terms of biological role, binds with high affinity to muscle nicotinic acetylcholine receptor (nAChR) and hinders acetylcholine binding to the receptor, thereby impairing neuromuscular transmission. Competes with the binding of alpha-bungarotoxin on muscle AChR (from Torpedo) with an IC(50) of 0.30 uM. Causes muscle paralysis, spasms and increased respiration. The protein is Short neurotoxin 2 of Pseudonaja textilis (Eastern brown snake).